We begin with the raw amino-acid sequence, 425 residues long: Kynurenine/alpha-aminoadipate aminotransferase, mitochondrial (425 aa).

A mitochondrion-targeting transit peptide spans 1–29 (MNYARFITATSAARKPSTIRVMTEILSKA). Substrate is bound at residue Arg20. Lys69 bears the N6-acetyllysine mark. Substrate-binding residues include Tyr74 and Tyr142. Positions 178 to 208 (WKPEDSKNPKKNSPKFLYTVPNGNNPSGNSL) are disordered. Lys179 bears the N6-acetyllysine mark. Polar residues predominate over residues 198–208 (PNGNNPSGNSL). Asn202 is a substrate binding site. Position 263 is an N6-(pyridoxal phosphate)lysine; alternate (Lys263). An N6-acetyllysine; alternate mark is found at Lys263 and Lys339. Lys263 and Lys339 each carry N6-succinyllysine; alternate. Arg399 provides a ligand contact to substrate. Lys422 carries the N6-acetyllysine modification.

Belongs to the class-I pyridoxal-phosphate-dependent aminotransferase family. In terms of assembly, homodimer. Pyridoxal 5'-phosphate serves as cofactor.

It localises to the mitochondrion. It catalyses the reaction L-kynurenine + 2-oxoglutarate = kynurenate + L-glutamate + H2O. The enzyme catalyses L-2-aminoadipate + 2-oxoglutarate = 2-oxoadipate + L-glutamate. It carries out the reaction glycine + 2-oxoglutarate = glyoxylate + L-glutamate. The catalysed reaction is L-kynurenine + glyoxylate = kynurenate + glycine + H2O. It catalyses the reaction 3-hydroxy-L-kynurenine + glyoxylate = xanthurenate + glycine + H2O. The enzyme catalyses 2-oxohexanoate + L-kynurenine = L-2-aminohexanoate + kynurenate + H2O. It carries out the reaction 3-phenylpyruvate + L-kynurenine = kynurenate + L-phenylalanine + H2O. The catalysed reaction is 4-methylsulfanyl-2-oxobutanoate + L-kynurenine = kynurenate + L-methionine + H2O. It catalyses the reaction 2-oxo-3-sulfanylpropanoate + L-kynurenine = kynurenate + L-cysteine + H2O. The enzyme catalyses indole-3-pyruvate + L-kynurenine = kynurenate + L-tryptophan + H2O. It carries out the reaction 2-oxopentanoate + L-kynurenine = L-2-aminopentanoate + kynurenate + H2O. The catalysed reaction is 4-methyl-2-oxopentanoate + L-kynurenine = kynurenate + L-leucine + H2O. It catalyses the reaction glyoxylate + L-methionine = 4-methylsulfanyl-2-oxobutanoate + glycine. The enzyme catalyses L-2-aminoadipate + glyoxylate = 2-oxoadipate + glycine. It carries out the reaction L-tyrosine + glyoxylate = 3-(4-hydroxyphenyl)pyruvate + glycine. The catalysed reaction is glyoxylate + L-phenylalanine = 3-phenylpyruvate + glycine. It catalyses the reaction L-tryptophan + glyoxylate = indole-3-pyruvate + glycine. The enzyme catalyses L-leucine + glyoxylate = 4-methyl-2-oxopentanoate + glycine. It carries out the reaction 2-oxobutanoate + L-kynurenine = (2S)-2-aminobutanoate + kynurenate + H2O. The catalysed reaction is 2-oxoadipate + L-kynurenine = L-2-aminoadipate + kynurenate + H2O. It participates in amino-acid degradation; L-lysine degradation via saccharopine pathway; glutaryl-CoA from L-lysine: step 4/6. Its function is as follows. Transaminase with broad substrate specificity. Has transaminase activity towards aminoadipate, kynurenine, methionine and glutamate. Shows activity also towards tryptophan, aspartate and hydroxykynurenine. Accepts a variety of oxo-acids as amino-group acceptors, with a preference for 2-oxoglutarate, 2-oxocaproic acid, phenylpyruvate and alpha-oxo-gamma-methiol butyric acid. Can also use glyoxylate as amino-group acceptor (in vitro). The sequence is that of Kynurenine/alpha-aminoadipate aminotransferase, mitochondrial from Bos taurus (Bovine).